A 37-amino-acid polypeptide reads, in one-letter code: Protein YhiY (37 aa).

The chain is Protein YhiY from Escherichia coli (strain K12).